Reading from the N-terminus, the 450-residue chain is Na(+)/H(+) antiporter NhaA (450 aa).

11 consecutive transmembrane segments (helical) span residues 24–44, 75–95, 111–131, 140–160, 169–189, 196–216, 224–244, 318–338, 352–372, 390–410, and 422–442; these read FFAI…LALV, LILW…GLEI, ALPI…YLAL, GWGV…SLLG, VFLT…IAFF, FSFL…NWLG, LLVG…ATIA, WVAW…TVSA, IFFG…WLLV, GIGW…TLAF, and SILC…RVLL.

This sequence belongs to the NhaA Na(+)/H(+) (TC 2.A.33) antiporter family.

The protein localises to the cell inner membrane. The catalysed reaction is Na(+)(in) + 2 H(+)(out) = Na(+)(out) + 2 H(+)(in). In terms of biological role, na(+)/H(+) antiporter that extrudes sodium in exchange for external protons. This chain is Na(+)/H(+) antiporter NhaA, found in Oleidesulfovibrio alaskensis (strain ATCC BAA-1058 / DSM 17464 / G20) (Desulfovibrio alaskensis).